Here is a 106-residue protein sequence, read N- to C-terminus: MGLCNTNLTLSAAQATPEAVEYTEILEAEDRPWVTVVWDDPVNLMHYVTYIFQKLFGYSKAKATELMLQVHNEGKAVVSSGSRDKMEHDVRRLHAAGLWATMQRDD.

Belongs to the ClpS family. As to quaternary structure, binds to the N-terminal domain of the chaperone ClpA.

Involved in the modulation of the specificity of the ClpAP-mediated ATP-dependent protein degradation. The polypeptide is ATP-dependent Clp protease adapter protein ClpS (Nocardia farcinica (strain IFM 10152)).